The primary structure comprises 804 residues: Leucine--tRNA ligase (804 aa).

A 'HIGH' region motif is present at residues 40-51; sequence PYPSGQGLHVGH. Residues 576–580 carry the 'KMSKS' region motif; sequence KMSKS. Residue K579 participates in ATP binding.

Belongs to the class-I aminoacyl-tRNA synthetase family.

The protein resides in the cytoplasm. The catalysed reaction is tRNA(Leu) + L-leucine + ATP = L-leucyl-tRNA(Leu) + AMP + diphosphate. This is Leucine--tRNA ligase from Oceanobacillus iheyensis (strain DSM 14371 / CIP 107618 / JCM 11309 / KCTC 3954 / HTE831).